The primary structure comprises 672 residues: MKKDSESNSSDKSNKEELSTGRRGGNPMIIALVITVLAAMLFFNQPEPSSLISASFFRSQLEKNNIESVEIGDIEVSGTFKTRPQMPASESADGDAKPKELLKRFRFTRPAGADYAVQLSEDLEKRNIKDWKFSPPDNTAAILNLLILVGLPLAIFFFIFMMIRRTRNDMMGGGFLSGFSKSPAKRFEATDKVITFNDVAGLEGVKADLQEIVDFLKTPEKFQKLGGQVPKGVLLNGPPGTGKTLLARAVAGEADVPFFSVNGSEFIQMFVGVGASRVRDLFKTAKEQSPSIIFIDEIDAVGRQRGAGLGGGHDEREQTLNQILGEMDGFGGAQAVIVIAATNRPDVLDPALLRPGRFDRHVTVGRPTMKGREEIFKVHVRDVPLGDDVDLHRLAAGTVGLTGADIRNMVNEAALWAARGDKKIVEMSDFDYARDKILMGAKREEVLLESEKEKTAYHEAGHTLTAWHLEGSHIVHKVTIIPRGRALGVTQYVPNEDRLSMSKRELEHQLIVLLGGRAAEKIIYTETCVGAENDLERATSIARRMVTHWGMSPKIGPVSYKTSDEDPFLGREIHQQRQFSEHTQELIDEEVARILMEADQKAEQLLREHRGQLETITRELLDREELNEAELTELIGPSIHKRLGDEEGKVEQIMAPEGAAERTSNASARRED.

Residues 1 to 22 (MKKDSESNSSDKSNKEELSTGR) are disordered. Topologically, residues 1 to 23 (MKKDSESNSSDKSNKEELSTGRR) are cytoplasmic. The helical transmembrane segment at 24–44 (GGNPMIIALVITVLAAMLFFN) threads the bilayer. Topologically, residues 45–141 (QPEPSSLISA…KFSPPDNTAA (97 aa)) are periplasmic. The helical transmembrane segment at 142–162 (ILNLLILVGLPLAIFFFIFMM) threads the bilayer. Over 163-672 (IRRTRNDMMG…TSNASARRED (510 aa)) the chain is Cytoplasmic. Residue 237–244 (GPPGTGKT) participates in ATP binding. H458 serves as a coordination point for Zn(2+). Residue E459 is part of the active site. Residues H462 and D534 each contribute to the Zn(2+) site. The disordered stretch occupies residues 642-672 (RLGDEEGKVEQIMAPEGAAERTSNASARRED). The span at 662–672 (RTSNASARRED) shows a compositional bias: polar residues.

The protein in the central section; belongs to the AAA ATPase family. This sequence in the C-terminal section; belongs to the peptidase M41 family. In terms of assembly, homohexamer. Requires Zn(2+) as cofactor.

It localises to the cell inner membrane. Its function is as follows. Acts as a processive, ATP-dependent zinc metallopeptidase for both cytoplasmic and membrane proteins. Plays a role in the quality control of integral membrane proteins. This is ATP-dependent zinc metalloprotease FtsH 1 from Rhodopirellula baltica (strain DSM 10527 / NCIMB 13988 / SH1).